Reading from the N-terminus, the 213-residue chain is Charged multivesicular body protein 2b (213 aa).

Ala-2 is subject to N-acetylalanine. The stretch at 25 to 55 (QRAIIRDRAALEKQEKQLELEIKKMAKIGNK) forms a coiled coil. Residues 179–194 (AKAPSAARSLPSASTS) show a composition bias toward low complexity. A disordered region spans residues 179–199 (AKAPSAARSLPSASTSKATIS). Residue Ser-199 is modified to Phosphoserine. The MIT-interacting motif motif lies at 201–211 (EEIERQLKALG).

The protein belongs to the SNF7 family. Probable core component of the endosomal sorting required for transport complex III (ESCRT-III). ESCRT-III components are thought to multimerize to form a flat lattice on the perimeter membrane of the endosome. Several assembly forms of ESCRT-III may exist that interact and act sequentially. Interacts with CHMP2A. Interacts with VPS4A. Interacts with VPS4B; the interaction is direct. As to expression, widely expressed. Expressed in brain, heart, skeletal muscle, spleen, kidney, liver, small intestine, pancreas, lung, placenta and leukocytes. In brain, it is expressed in cerebellum, cerebral cortex, medulla, spinal cord, occipital lobe, frontal lobe, temporal lobe and putamen.

It localises to the cytoplasm. The protein localises to the cytosol. It is found in the late endosome membrane. In terms of biological role, probable core component of the endosomal sorting required for transport complex III (ESCRT-III) which is involved in multivesicular bodies (MVBs) formation and sorting of endosomal cargo proteins into MVBs. MVBs contain intraluminal vesicles (ILVs) that are generated by invagination and scission from the limiting membrane of the endosome and mostly are delivered to lysosomes enabling degradation of membrane proteins, such as stimulated growth factor receptors, lysosomal enzymes and lipids. The MVB pathway appears to require the sequential function of ESCRT-O, -I,-II and -III complexes. ESCRT-III proteins mostly dissociate from the invaginating membrane before the ILV is released. The ESCRT machinery also functions in topologically equivalent membrane fission events, such as the terminal stages of cytokinesis and the budding of enveloped viruses (HIV-1 and other lentiviruses). ESCRT-III proteins are believed to mediate the necessary vesicle extrusion and/or membrane fission activities, possibly in conjunction with the AAA ATPase VPS4. This is Charged multivesicular body protein 2b (CHMP2B) from Homo sapiens (Human).